A 483-amino-acid chain; its full sequence is Glutamyl-tRNA(Gln) amidotransferase subunit A (483 aa).

Catalysis depends on charge relay system residues Lys77 and Ser152. The Acyl-ester intermediate role is filled by Ser176.

The protein belongs to the amidase family. GatA subfamily. In terms of assembly, heterotrimer of A, B and C subunits.

It catalyses the reaction L-glutamyl-tRNA(Gln) + L-glutamine + ATP + H2O = L-glutaminyl-tRNA(Gln) + L-glutamate + ADP + phosphate + H(+). Its function is as follows. Allows the formation of correctly charged Gln-tRNA(Gln) through the transamidation of misacylated Glu-tRNA(Gln) in organisms which lack glutaminyl-tRNA synthetase. The reaction takes place in the presence of glutamine and ATP through an activated gamma-phospho-Glu-tRNA(Gln). This is Glutamyl-tRNA(Gln) amidotransferase subunit A from Listeria monocytogenes serovar 1/2a (strain ATCC BAA-679 / EGD-e).